The sequence spans 570 residues: Cation/calcium exchanger 1 (570 aa).

13 helical membrane passes run 14 to 34, 97 to 117, 141 to 161, 176 to 196, 212 to 232, 235 to 255, 344 to 364, 371 to 391, 401 to 421, 427 to 447, 479 to 499, 513 to 533, and 546 to 566; these read LSLL…ASQT, SPVL…YLLG, MAGV…SSVV, ILGG…VLIG, VFLL…KVTI, ALCY…SHFF, CAVV…CSHY, LILY…AYLT, FSLV…YMIA, LLIS…LTVL, YAGP…ISSL, SLLE…VIMP, and GLLA…FGVL.

This sequence belongs to the Ca(2+):cation antiporter (CaCA) (TC 2.A.19) family. Cation/calcium exchanger (CCX) subfamily. As to expression, expressed in roots, leaves, stems and flowers.

It is found in the vacuole membrane. Vacuolar membrane-localized H(+)-dependent K(+) and Na(+) transporter. The sequence is that of Cation/calcium exchanger 1 (CCX1) from Arabidopsis thaliana (Mouse-ear cress).